The sequence spans 187 residues: NADH-quinone oxidoreductase subunit B (187 aa).

Positions 55, 56, 121, and 150 each coordinate [4Fe-4S] cluster.

Belongs to the complex I 20 kDa subunit family. As to quaternary structure, NDH-1 is composed of 14 different subunits. Subunits NuoB, C, D, E, F, and G constitute the peripheral sector of the complex. Requires [4Fe-4S] cluster as cofactor.

It is found in the cell inner membrane. It catalyses the reaction a quinone + NADH + 5 H(+)(in) = a quinol + NAD(+) + 4 H(+)(out). Functionally, NDH-1 shuttles electrons from NADH, via FMN and iron-sulfur (Fe-S) centers, to quinones in the respiratory chain. The immediate electron acceptor for the enzyme in this species is believed to be ubiquinone. Couples the redox reaction to proton translocation (for every two electrons transferred, four hydrogen ions are translocated across the cytoplasmic membrane), and thus conserves the redox energy in a proton gradient. This Bdellovibrio bacteriovorus (strain ATCC 15356 / DSM 50701 / NCIMB 9529 / HD100) protein is NADH-quinone oxidoreductase subunit B.